The sequence spans 222 residues: uncharacterized protein (222 aa).

A signal peptide (tat-type signal) is located at residues 1–27 (MSFTRRKFVLGMGTVIFFTGSASSLLA). 3 4Fe-4S ferredoxin-type domains span residues 37 to 66 (YAMI…PAQG), 83 to 114 (TQYH…RDEQ), and 115 to 144 (GIVR…LNPV). [4Fe-4S] cluster-binding residues include C46, C49, C52, C56, C92, C95, C100, C104, C124, C127, C130, C134, C151, C154, C167, and C171.

Post-translationally, predicted to be exported by the Tat system. The position of the signal peptide cleavage has not been experimentally proven.

This is an uncharacterized protein from Escherichia coli O157:H7.